We begin with the raw amino-acid sequence, 121 residues long: Large ribosomal subunit protein bL12 (121 aa).

Belongs to the bacterial ribosomal protein bL12 family. Homodimer. Part of the ribosomal stalk of the 50S ribosomal subunit. Forms a multimeric L10(L12)X complex, where L10 forms an elongated spine to which 2 to 4 L12 dimers bind in a sequential fashion. Binds GTP-bound translation factors.

Forms part of the ribosomal stalk which helps the ribosome interact with GTP-bound translation factors. Is thus essential for accurate translation. The polypeptide is Large ribosomal subunit protein bL12 (Shewanella pealeana (strain ATCC 700345 / ANG-SQ1)).